Consider the following 341-residue polypeptide: Phospholipid phosphatase homolog 1.2 homolog (341 aa).

3 helical membrane-spanning segments follow: residues 30 to 50, 71 to 91, and 122 to 142; these read LFIF…LLGV, ITAV…VLFV, and LLTY…LNIV. Asn-162 carries N-linked (GlcNAc...) asparagine glycosylation. The next 2 membrane-spanning stretches (helical) occupy residues 223-243 and 257-277; these read RIVV…ISFS and VGIF…TDLF. 2 disordered regions span residues 284 to 308 and 322 to 341; these read SETQ…ERHR and FEAT…PQSA. Positions 299-308 are enriched in basic and acidic residues; that stretch reads RNSEDEERHR.

This sequence belongs to the PA-phosphatase related phosphoesterase family.

It is found in the membrane. This chain is Phospholipid phosphatase homolog 1.2 homolog, found in Caenorhabditis elegans.